Here is a 177-residue protein sequence, read N- to C-terminus: Embryogenesis-like protein (177 aa).

Residues 98–118 (VDEINLKFAEAREEIEMAMDA) adopt a coiled-coil conformation.

In terms of assembly, interacts with HAG1/GCN5. As to expression, expressed in flowers, leaves, stems and siliques.

Its subcellular location is the nucleus. Functionally, activates gene expression by recruiting HAG1/GCN5 and triggering subsequent histone H3 acetylation of target genes promoters. The sequence is that of Embryogenesis-like protein from Arabidopsis thaliana (Mouse-ear cress).